We begin with the raw amino-acid sequence, 341 residues long: Protein phosphatase methylesterase 1 (341 aa).

Positions 1 to 24 (MAFRKEELSQTLYENESEQSSETK) are disordered. The segment covering 9-20 (SQTLYENESEQS) has biased composition (polar residues). Catalysis depends on residues serine 153, aspartate 178, and histidine 304.

Belongs to the AB hydrolase superfamily.

It catalyses the reaction [phosphatase 2A protein]-C-terminal L-leucine methyl ester + H2O = [phosphatase 2A protein]-C-terminal L-leucine + methanol + H(+). In terms of biological role, demethylates proteins that have been reversibly carboxymethylated. Demethylates the phosphatase PP2A catalytic subunit. This chain is Protein phosphatase methylesterase 1 (ppe1), found in Schizosaccharomyces pombe (strain 972 / ATCC 24843) (Fission yeast).